We begin with the raw amino-acid sequence, 666 residues long: tRNA 5-methylaminomethyl-2-thiouridine biosynthesis bifunctional protein MnmC (666 aa).

The tract at residues 1 to 245 (MKQYAIQPAT…KREMLCGVME (245 aa)) is tRNA (mnm(5)s(2)U34)-methyltransferase. An FAD-dependent cmnm(5)s(2)U34 oxidoreductase region spans residues 270–666 (IGGGIASALL…RKLLKGKAVK (397 aa)).

The protein in the N-terminal section; belongs to the methyltransferase superfamily. tRNA (mnm(5)s(2)U34)-methyltransferase family. This sequence in the C-terminal section; belongs to the DAO family. It depends on FAD as a cofactor.

The protein resides in the cytoplasm. It catalyses the reaction 5-aminomethyl-2-thiouridine(34) in tRNA + S-adenosyl-L-methionine = 5-methylaminomethyl-2-thiouridine(34) in tRNA + S-adenosyl-L-homocysteine + H(+). Catalyzes the last two steps in the biosynthesis of 5-methylaminomethyl-2-thiouridine (mnm(5)s(2)U) at the wobble position (U34) in tRNA. Catalyzes the FAD-dependent demodification of cmnm(5)s(2)U34 to nm(5)s(2)U34, followed by the transfer of a methyl group from S-adenosyl-L-methionine to nm(5)s(2)U34, to form mnm(5)s(2)U34. This is tRNA 5-methylaminomethyl-2-thiouridine biosynthesis bifunctional protein MnmC from Salmonella arizonae (strain ATCC BAA-731 / CDC346-86 / RSK2980).